Here is a 435-residue protein sequence, read N- to C-terminus: Amino acid transporter AVT6C (435 aa).

Positions 1 to 24 are disordered; it reads MTPQIKTHLLPKQEPSSSENHGSS. 11 helical membrane-spanning segments follow: residues 28–48, 53–73, 100–120, 148–168, 181–201, 219–239, 260–280, 307–327, 354–374, 375–395, and 408–428; these read IVFN…PAAF, IVPA…SVGF, IAVQ…FSII, WNTR…PLVL, VSFL…ISAL, GSFW…TFHF, ISVI…YLLF, IVRL…NFSL, LALL…WYFF, QFMG…AIVL, and IVAA…ISTN.

It belongs to the amino acid/polyamine transporter 2 family. Amino acid/auxin permease (AAAP) (TC 2.A.18.6) subfamily.

Its subcellular location is the membrane. This chain is Amino acid transporter AVT6C, found in Arabidopsis thaliana (Mouse-ear cress).